The chain runs to 206 residues: Small ribosomal subunit protein uS4 (206 aa).

Residues 96–156 (GRLDNVVYRM…EKAKKQSRVK (61 aa)) enclose the S4 RNA-binding domain.

It belongs to the universal ribosomal protein uS4 family. In terms of assembly, part of the 30S ribosomal subunit. Contacts protein S5. The interaction surface between S4 and S5 is involved in control of translational fidelity.

One of the primary rRNA binding proteins, it binds directly to 16S rRNA where it nucleates assembly of the body of the 30S subunit. In terms of biological role, with S5 and S12 plays an important role in translational accuracy. This is Small ribosomal subunit protein uS4 from Klebsiella pneumoniae (strain 342).